We begin with the raw amino-acid sequence, 159 residues long: MTRSEKVEIIAKLEEGFKASEAIVVCNYRGLSTKKLEELRNNARENNVKVQIVKNTLANIALNNSGKTGLVLKDTNIYLWGEDQLGVSKVAAKFEENNDKFEIKTAHIEGEVADVAKVKALAKMPSRNELLAMLLQVWNAPITNFTIGLNALKNKKESE.

This sequence belongs to the universal ribosomal protein uL10 family. Part of the ribosomal stalk of the 50S ribosomal subunit. The N-terminus interacts with L11 and the large rRNA to form the base of the stalk. The C-terminus forms an elongated spine to which L12 dimers bind in a sequential fashion forming a multimeric L10(L12)X complex.

In terms of biological role, forms part of the ribosomal stalk, playing a central role in the interaction of the ribosome with GTP-bound translation factors. This Campylobacter jejuni (strain RM1221) protein is Large ribosomal subunit protein uL10.